We begin with the raw amino-acid sequence, 240 residues long: Protein YIPF6 (240 aa).

The Cytoplasmic segment spans residues 1–91 (MVVSHLNRTV…PKKSSALLRD (91 aa)). Residues 92–112 (WDLWGPLLLCVTLALMLQGGS) form a helical membrane-spanning segment. The Lumenal segment spans residues 113-125 (ADSEEDGRPQFAE). The chain crosses the membrane as a helical span at residues 126–146 (VFVIIWFGSVIITLNSKLLGG). At 147-149 (TIS) the chain is on the cytoplasmic side. Residues 150-170 (FFQSLCVLGYCILPLTVAMIV) form a helical membrane-spanning segment. Residues 171–172 (CR) are Lumenal-facing. A helical transmembrane segment spans residues 173 to 193 (IVLLGGSGVVSFAVRLIVVTA). Residues 194–215 (SFSWSTFASTAFLADSQPTNRK) lie on the Cytoplasmic side of the membrane. Residues 216–236 (ALVVYPVFLFYFVIGWMILTF) traverse the membrane as a helical segment. At 237–240 (SPSH) the chain is on the lumenal side.

Belongs to the YIP1 family.

It localises to the golgi apparatus membrane. This chain is Protein YIPF6 (yipf6), found in Danio rerio (Zebrafish).